The sequence spans 1442 residues: ABC transporter G family member 35 (1442 aa).

Positions 169–442 constitute an ABC transporter 1 domain; the sequence is LGMIGIRLAK…FESFGFKCPE (274 aa). 202–209 provides a ligand contact to ATP; it reads GPPSSGKT. The region spanning 520 to 733 is the ABC transmembrane type-2 1 domain; it reads ELLKSCWDKE…AFNAITVNEL (214 aa). Transmembrane regions (helical) follow at residues 538-558, 573-593, 619-639, 657-677, 683-703, 714-734, and 769-789; these read FFYVFKTVQIIIIAAITSTLY, IYVGSLLFAMIVNMFNGLAEM, LPTFLLGIPISIFESTAWMVV, FLIIFLIQQMAAGIFRFIAST, IANTGGVLVLLVVFLTGGFLL, WAYWISPLSYAFNAITVNELF, and IGVGGLLGFTVIFNGFFTLAL. The region spanning 840 to 1092 is the ABC transporter 2 domain; it reads MSFDDVKYFV…KVVEYFESFP (253 aa). 885–892 lines the ATP pocket; it reads GVSGAGKT. In terms of domain architecture, ABC transmembrane type-2 2 spans 1165–1379; sequence GQFKSCLWKQ…TIYGLITSQY (215 aa). Transmembrane regions (helical) follow at residues 1186–1206, 1218–1238, 1272–1292, 1299–1319, 1329–1349, 1357–1377, and 1414–1434; these read LVRFIFTLATSLMIGSVFWQI, MVIGAIYAAVVFVGINNCSTV, LPYVLIQTTYYSLIIYSMVGF, FLWFIFINYFSFLYWTYYGMM, VASIFASAFYGIFNLFSGFFI, WWVWYYWICPVAWTIYGLITS, and PVAGVLVGFTVFFAFIFAFCI.

Belongs to the ABC transporter superfamily. ABCG family. PDR (TC 3.A.1.205) subfamily. As to expression, ubiquitous with higher levels in roots.

Its subcellular location is the membrane. May be a general defense protein. This Arabidopsis thaliana (Mouse-ear cress) protein is ABC transporter G family member 35 (ABCG35).